The chain runs to 92 residues: MARTVHCQHLNKSADGLDFQLYPGELGKRIFDNIGKEAWGLWQKKQTMLINEKKLNMMNVDDRKFLEEQMTNFLFEGKDVEIEGYVPPAEDE.

Belongs to the Fe(2+)-trafficking protein family.

Functionally, could be a mediator in iron transactions between iron acquisition and iron-requiring processes, such as synthesis and/or repair of Fe-S clusters in biosynthetic enzymes. This chain is Probable Fe(2+)-trafficking protein, found in Shewanella frigidimarina (strain NCIMB 400).